Consider the following 393-residue polypeptide: Metal tolerance protein C2 (393 aa).

The tract at residues 1–23 (MERSISFNPRGDNELPDDRSSDV) is disordered. The Cytoplasmic portion of the chain corresponds to 1-113 (MERSISFNPR…VTSGNRQMKR (113 aa)). Positions 11–21 (GDNELPDDRSS) are enriched in basic and acidic residues. The chain crosses the membrane as a helical span at residues 114–134 (LFLLIALNVLYSTTELSIGIF). The Vacuolar portion of the chain corresponds to 135–139 (TGRVG). The helical transmembrane segment at 140-160 (LVSDAFHLTFGCGLLTFSLFA) threads the bilayer. The Cytoplasmic segment spans residues 161–186 (MATSRKKPDHAYSYGYKRLEVLSAFT). Residues 187-207 (NALFLMFMSFSLAVEALHAFI) form a helical membrane-spanning segment. Residues 208–214 (QDESEHK) lie on the Vacuolar side of the membrane. The chain crosses the membrane as a helical span at residues 215-235 (HYLIVSAVTNLLVNLLGVWFF). At 236–259 (RNYARVNIAYRKAEDMNYHSVCLH) the chain is on the cytoplasmic side. A helical transmembrane segment spans residues 260–280 (VISDSIRSAGLILASWLLSLG). The Vacuolar portion of the chain corresponds to 281–283 (VEN). A helical transmembrane segment spans residues 284–304 (AEVLCLGLVSVTVFMLVMPLF). At 305 to 393 (KATGGVLLQM…QDLTLQTDYT (89 aa)) the chain is on the cytoplasmic side.

The protein belongs to the cation diffusion facilitator (CDF) transporter (TC 2.A.4) family.

Its subcellular location is the vacuole membrane. Involved in sequestration of excess metal in the cytoplasm into vacuoles to maintain metal homeostasis. This chain is Metal tolerance protein C2 (MTPC2), found in Arabidopsis thaliana (Mouse-ear cress).